A 521-amino-acid chain; its full sequence is Occludin (521 aa).

Residues 1–66 are Cytoplasmic-facing; it reads MSSRPFESPP…KWTSPPGVIR (66 aa). Residues 60–268 enclose the MARVEL domain; it reads SPPGVIRILS…IIFFAVKTRR (209 aa). Residues 67–89 traverse the membrane as a helical segment; that stretch reads ILSMLVIVMCIAIFGCVASTLAW. Residues 90–134 are Extracellular-facing; the sequence is DRGYGTGLMGGSIGYPYGSGFGSYGTGYGYGFGYGYGYGGYTDPR. Residues 135 to 159 traverse the membrane as a helical segment; the sequence is AAKGFLLAMVAFCFIAALVIFVTSV. At 160–169 the chain is on the cytoplasmic side; the sequence is IRSDISRTRR. Residues 170–194 traverse the membrane as a helical segment; sequence YYLTVIILSAFLGVMMFIATIVYIM. Residues 195-242 are Extracellular-facing; the sequence is GVNPTAQASGSLYSSQIYAMCNQFYASTATGLYMDQYLYHYCVVDPQE. Cys215 and Cys236 are oxidised to a cystine. A helical transmembrane segment spans residues 243 to 264; it reads AIAIVLGFMVIVAFALIIFFAV. Over 265–521 the chain is Cytoplasmic; sequence KTRRKMDRYD…MVGDYDRQKT (257 aa). At Ser301 the chain carries Phosphoserine. The disordered stretch occupies residues 301 to 407; that stretch reads SAGTQDMPPP…ETDYTTGGES (107 aa). Thr304 carries the post-translational modification Phosphothreonine. Phosphoserine occurs at positions 312, 320, and 339. A Phosphotyrosine modification is found at Tyr367. Phosphoserine is present on residues Ser368 and Ser369. A compositionally biased stretch (basic residues) spans 380 to 389; the sequence is APSKGRTGRP. Positions 390 to 399 are enriched in basic and acidic residues; sequence KRLEQDHYET. Phosphotyrosine occurs at positions 397 and 401. Thr402 and Thr403 each carry phosphothreonine; by PKC/PRKCH. Ser407 is modified (phosphoserine). In terms of domain architecture, OCEL spans 413-521; it reads EDWIREYPPI…MVGDYDRQKT (109 aa). Residues 424-488 are a coiled coil; the sequence is SDQQRQLYKR…EYNRLKQVKG (65 aa). Position 489 is a phosphoserine (Ser489).

It belongs to the ELL/occludin family. In terms of assembly, interacts with TJP1/ZO1. Interacts with VAPA. Interacts with CLDN1, CLDN6, CLDN9, CLDN11, CLDN12 and CLDN17. Interacts with PLSCR1. Interacts with LSR, ILDR1 and ILDR2. Interacts with TJP2/ZO2. Post-translationally, dephosphorylated by PTPRJ. Less-phosphorylated forms are found in basolateral membrane, cytosol and tight junction. More-heavily phosphorylated forms are concentrated exclusively in tight junction. As to expression, localized at tight junctions of both epithelial and endothelial cells.

Its subcellular location is the cell membrane. It is found in the cell junction. It localises to the tight junction. Functionally, may play a role in the formation and regulation of the tight junction (TJ) paracellular permeability barrier. Interacts with ZO-1. The chain is Occludin (OCLN) from Canis lupus familiaris (Dog).